Reading from the N-terminus, the 107-residue chain is Large ribosomal subunit protein uL24 (107 aa).

The protein belongs to the universal ribosomal protein uL24 family. In terms of assembly, part of the 50S ribosomal subunit.

Its function is as follows. One of two assembly initiator proteins, it binds directly to the 5'-end of the 23S rRNA, where it nucleates assembly of the 50S subunit. In terms of biological role, one of the proteins that surrounds the polypeptide exit tunnel on the outside of the subunit. This chain is Large ribosomal subunit protein uL24, found in Neisseria gonorrhoeae (strain ATCC 700825 / FA 1090).